A 351-amino-acid chain; its full sequence is Formyl peptide receptor-related sequence 1 (351 aa).

Over 1–27 (METNYSIPLNGSDVVIYDSTISRVLWI) the chain is Extracellular. 2 N-linked (GlcNAc...) asparagine glycosylation sites follow: N4 and N10. A helical transmembrane segment spans residues 28 to 50 (LSMVVVSITFFLGVLGNGLVIWV). Residues 51 to 61 (AGFRMPHTVTT) are Cytoplasmic-facing. The chain crosses the membrane as a helical span at residues 62 to 83 (IWYLNLALADFSFTATLPFLLV). Over 84–100 (EMAMKEKWPFGWFLCKL) the chain is Extracellular. C98 and C176 are oxidised to a cystine. The helical transmembrane segment at 101-121 (VHIAVDVNLFGSVFLIAVIAL) threads the bilayer. The Cytoplasmic segment spans residues 122-140 (DRCICVLHPVWAQNHRTVS). A helical membrane pass occupies residues 141–162 (LARNVVVGSWIFALILTLPLFL). Residues 163–205 (FLTTVRDARGDVHCRLSFVSWGNSVEERLNTAITFVTTRGIIR) are Extracellular-facing. The helical transmembrane segment at 206 to 226 (FIVSFSLPMSFVAICYGLITT) threads the bilayer. Residues 227 to 242 (KIHKKAFVNSSRPFRV) are Cytoplasmic-facing. Residues 243 to 266 (LTGVVASFFICWFPFQLVALLGTV) form a helical membrane-spanning segment. At 267–286 (WLKEMQFSGSYKIIGRLVNP) the chain is on the extracellular side. A helical transmembrane segment spans residues 287-306 (TSSLAFFNSCLNPILYVFMG). Over 307–351 (QDFQERLIHSLSSRLQRALSEDSGHISDTRTNLASLPEDIEIKAI) the chain is Cytoplasmic.

It belongs to the G-protein coupled receptor 1 family. Expressed exclusively in vomeronasal neurons. Expressed in 0.6 % of a subset of sensory neurons located in the basal layer of the vomeronasal organ. Each neuron appears to express only one receptor gene. Expressed mostly in neutrophils, followed by spleen and lung and expressed at very low levels in heart and liver.

The protein resides in the cell membrane. In terms of biological role, low affinity receptor for N-formyl-methionyl peptides. Receptor for lipoxin A4. May have an olfactory function associated with the identification of pathogens or of pathogenic states. This chain is Formyl peptide receptor-related sequence 1 (Fpr-s1), found in Mus musculus (Mouse).